The primary structure comprises 572 residues: Acyl-coenzyme A synthetase ACSM2, mitochondrial (572 aa).

The N-terminal 46 residues, 1–46 (MHWLWKIPRLCTFWGTEMFHRTFHMNIKKLMPIQWGHQEVPAKFNF), are a transit peptide targeting the mitochondrion. Residue Gln-139 coordinates CoA. ATP contacts are provided by residues 221–229 (TSGTSGPPK), 359–364 (EIYGQT), Asp-446, and Arg-461. Residue Thr-364 participates in substrate binding. 469 to 471 (SGY) contacts CoA. Residue Arg-472 coordinates substrate. Residues Arg-501, Lys-532, and 540–542 (YPR) contribute to the CoA site. Lys-557 serves as a coordination point for ATP.

It belongs to the ATP-dependent AMP-binding enzyme family. As to quaternary structure, monomer. Requires Mg(2+) as cofactor. Mn(2+) serves as cofactor. As to expression, detected in kidney, in proximal tubules.

The protein resides in the mitochondrion. The enzyme catalyses a medium-chain fatty acid + ATP + CoA = a medium-chain fatty acyl-CoA + AMP + diphosphate. The catalysed reaction is benzoate + ATP + CoA = benzoyl-CoA + AMP + diphosphate. It catalyses the reaction hexanoate + ATP + CoA = hexanoyl-CoA + AMP + diphosphate. It carries out the reaction butanoate + ATP + CoA = butanoyl-CoA + AMP + diphosphate. The enzyme catalyses octanoate + ATP + CoA = octanoyl-CoA + AMP + diphosphate. The catalysed reaction is decanoate + ATP + CoA = decanoyl-CoA + AMP + diphosphate. Functionally, catalyzes the activation of fatty acids by CoA to produce an acyl-CoA, the first step in fatty acid metabolism. Capable of activating medium-chain fatty acids (e.g. butyric (C4) to decanoic (C10) acids), and certain carboxylate-containing xenobiotics, e.g. benzoate. The sequence is that of Acyl-coenzyme A synthetase ACSM2, mitochondrial (Acsm2) from Rattus norvegicus (Rat).